Reading from the N-terminus, the 392-residue chain is Bifunctional enzyme Fae/Hps (392 aa).

Residues 1-161 (MFQIGEALMG…EESNKSTHAI (161 aa)) are formaldehyde-activating enzyme. Histidine 17 serves as the catalytic Proton donor. Positions 19, 48, 66, 68, and 83 each coordinate substrate. Positions 162–392 (MGFKVTRLWD…IDQFRVMTDF (231 aa)) are 3-hexulose-6-phosphate synthase.

The protein in the N-terminal section; belongs to the formaldehyde-activating enzyme family. In the C-terminal section; belongs to the HPS/KGPDC family. HPS subfamily.

The enzyme catalyses 5,6,7,8-tetrahydromethanopterin + formaldehyde = 5,10-methylenetetrahydromethanopterin + H2O. The catalysed reaction is D-ribulose 5-phosphate + formaldehyde = D-arabino-hex-3-ulose 6-phosphate. It functions in the pathway carbohydrate biosynthesis; D-ribose 5-phosphate biosynthesis. Catalyzes the condensation of formaldehyde with tetrahydromethanopterin (H(4)MPT) to 5,10-methylenetetrahydromethanopterin. In terms of biological role, catalyzes the reversible formation of ribulose-5-phosphate and formaldehyde from 3-hexulose-6-phosphate. The protein is Bifunctional enzyme Fae/Hps of Methanosarcina acetivorans (strain ATCC 35395 / DSM 2834 / JCM 12185 / C2A).